Consider the following 352-residue polypeptide: Invasion chromosome antigen T (352 aa).

This sequence belongs to the IcaT/YfdF family.

The protein localises to the secreted. Functionally, may contribute to pathogenesis, although some of its characteristics suggest it is a fossil gene. The sequence is that of Invasion chromosome antigen T from Shigella flexneri serotype 5a (strain M90T).